The chain runs to 318 residues: NLP effector protein 9 (318 aa).

The first 19 residues, 1–19 (MRLFAFLWSSVAFLSTVQA), serve as a signal peptide directing secretion. Positions 24–35 (TASQTQDDSSTP) are enriched in low complexity. Disordered stretches follow at residues 24–43 (TASQ…PDKY) and 50–93 (LRTK…PAPT). Positions 55–65 (PMATPNRTIMP) are enriched in polar residues. N-linked (GlcNAc...) asparagine glycosylation is present at Asn60. Pro residues predominate over residues 73-93 (PEPPTPEPTYLPTLSPTPAPT). Positions 185–195 (AIMYSWYFPKD) match the Conserved undecapeptide motif I motif. Positions 202 to 208 (GHRHDWE) match the Hepta-peptide GHRHDWE motif II motif.

Belongs to the Necrosis inducing protein (NPP1) family.

It localises to the secreted. Secreted effector that contributes to virulence during infection by P.capsici. Induces distinct chlorosis at 3 days after inoculation of host C.annuum leaves, and all the chlorotic areas gradually turn brown and become moderately necrotic at 7 days after inoculation. Caused only small necrotic areas at 7 days after non-host N.benthamiana leaves infection. This chain is NLP effector protein 9, found in Phytophthora capsici.